The sequence spans 450 residues: Tubulin alpha-2 chain (450 aa).

GTP is bound by residues Gln-11, Glu-71, Gly-144, Thr-145, Thr-179, Asn-206, and Asn-228. Glu-71 is a Mg(2+) binding site. The active site involves Glu-254. At Thr-349 the chain carries Phosphothreonine. The tract at residues 430 to 450 (KDYEEVGAEGGDDEDDEGEEY) is disordered. Positions 431–450 (DYEEVGAEGGDDEDDEGEEY) are enriched in acidic residues.

This sequence belongs to the tubulin family. In terms of assembly, dimer of alpha and beta chains. A typical microtubule is a hollow water-filled tube with an outer diameter of 25 nm and an inner diameter of 15 nM. Alpha-beta heterodimers associate head-to-tail to form protofilaments running lengthwise along the microtubule wall with the beta-tubulin subunit facing the microtubule plus end conferring a structural polarity. Microtubules usually have 13 protofilaments but different protofilament numbers can be found in some organisms and specialized cells. Mg(2+) is required as a cofactor. Undergoes a tyrosination/detyrosination cycle, the cyclic removal and re-addition of a C-terminal tyrosine residue by the enzymes tubulin tyrosine carboxypeptidase (TTCP) and tubulin tyrosine ligase (TTL), respectively. In terms of processing, acetylation of alpha chains at Lys-40 stabilizes microtubules and affects affinity and processivity of microtubule motors. This modification has a role in multiple cellular functions, ranging from cell motility, cell cycle progression or cell differentiation to intracellular trafficking and signaling.

The protein resides in the cytoplasm. It localises to the cytoskeleton. It catalyses the reaction GTP + H2O = GDP + phosphate + H(+). Its function is as follows. Tubulin is the major constituent of microtubules, a cylinder consisting of laterally associated linear protofilaments composed of alpha- and beta-tubulin heterodimers. Microtubules grow by the addition of GTP-tubulin dimers to the microtubule end, where a stabilizing cap forms. Below the cap, tubulin dimers are in GDP-bound state, owing to GTPase activity of alpha-tubulin. This is Tubulin alpha-2 chain (TUBA2) from Arabidopsis thaliana (Mouse-ear cress).